The following is an 842-amino-acid chain: Translation initiation factor IF-2 (842 aa).

Residues 121–144 (TESTSVEKSESDDVTLEEESSKKV) form a disordered region. Residues 340-510 (PRAPVVTVMG…LLMAELLELK (171 aa)) enclose the tr-type G domain. A G1 region spans residues 349–356 (GHVDHGKT). GTP is bound at residue 349 to 356 (GHVDHGKT). The segment at 374–378 (GITQH) is G2. Residues 396-399 (DTPG) are G3. GTP is bound by residues 396-400 (DTPGH) and 450-453 (NKID). Residues 450–453 (NKID) form a G4 region. Residues 486–488 (SAK) form a G5 region.

This sequence belongs to the TRAFAC class translation factor GTPase superfamily. Classic translation factor GTPase family. IF-2 subfamily.

The protein resides in the cytoplasm. In terms of biological role, one of the essential components for the initiation of protein synthesis. Protects formylmethionyl-tRNA from spontaneous hydrolysis and promotes its binding to the 30S ribosomal subunits. Also involved in the hydrolysis of GTP during the formation of the 70S ribosomal complex. The sequence is that of Translation initiation factor IF-2 from Ehrlichia chaffeensis (strain ATCC CRL-10679 / Arkansas).